A 209-amino-acid chain; its full sequence is Small ribosomal subunit protein uS3 (209 aa).

A KH type-2 domain is found at isoleucine 38–lysine 107.

It belongs to the universal ribosomal protein uS3 family. As to quaternary structure, part of the 30S ribosomal subunit. Forms a tight complex with proteins S10 and S14.

Binds the lower part of the 30S subunit head. Binds mRNA in the 70S ribosome, positioning it for translation. The chain is Small ribosomal subunit protein uS3 from Thermotoga petrophila (strain ATCC BAA-488 / DSM 13995 / JCM 10881 / RKU-1).